A 438-amino-acid chain; its full sequence is Putative formin-like protein 21a (438 aa).

Residues 1-74 (MSPVEISGAD…RVLPRPPPPP (74 aa)) are disordered. A compositionally biased stretch (pro residues) spans 22 to 61 (PLPPPPPPPPPPMRRRAPLPPPPPPPMRRRAPLPPPPPPA). Positions 124-438 (FPCPSKKKSS…SYGYFDQPWI (315 aa)) constitute an FH2 domain.

It belongs to the formin-like family. Class-II subfamily.

This chain is Putative formin-like protein 21a (FH21A), found in Arabidopsis thaliana (Mouse-ear cress).